A 250-amino-acid chain; its full sequence is 5'-nucleotidase SurE (250 aa).

Positions 8, 9, 39, and 91 each coordinate a divalent metal cation.

Belongs to the SurE nucleotidase family. The cofactor is a divalent metal cation.

It localises to the cytoplasm. The enzyme catalyses a ribonucleoside 5'-phosphate + H2O = a ribonucleoside + phosphate. Functionally, nucleotidase that shows phosphatase activity on nucleoside 5'-monophosphates. This Syntrophotalea carbinolica (strain DSM 2380 / NBRC 103641 / GraBd1) (Pelobacter carbinolicus) protein is 5'-nucleotidase SurE.